Here is an 84-residue protein sequence, read N- to C-terminus: MVIIRLARGGSKKRPFYNIVATDSRSRRDGRFIERVGFYNPVATKGESLRIAQDRLTYWQGVGAQLSPTVQRLVKEAQKAQPAA.

The protein belongs to the bacterial ribosomal protein bS16 family.

This is Small ribosomal subunit protein bS16 from Paraburkholderia phymatum (strain DSM 17167 / CIP 108236 / LMG 21445 / STM815) (Burkholderia phymatum).